A 246-amino-acid polypeptide reads, in one-letter code: Probable aquaporin AqpM (246 aa).

At 1-12 (MTMTLAKRFTAE) the chain is on the cytoplasmic side. A helical transmembrane segment spans residues 13–33 (VVGTFILVFFGPGAAVITLMI). Residues 34–56 (ANGADKPNEFNIGIGALGGLGDW) are Extracellular-facing. The chain crosses the membrane as a helical span at residues 57–77 (FAIGMAFALAIAAVIYSLGRI). Residues 78–104 (SGAHINPAVTIALWSIGRFPGREVVPY) lie on the Cytoplasmic side of the membrane. The short motif at 83–85 (NPA) is the NPA 1 element. A helical membrane pass occupies residues 105-125 (IVAQFIGAALGSLLFLACVGP). Topologically, residues 126–146 (AAATVGGLGATAPFPGIGYGQ) are extracellular. The chain crosses the membrane as a helical span at residues 147-167 (AILTEAIGTFLLMLVIMGVAV). Residues 168 to 173 (DERAPP) lie on the Cytoplasmic side of the membrane. Residues 174–194 (GFAGLVIGLTVGGIITTIGNI) traverse the membrane as a helical segment. The Extracellular segment spans residues 195 to 217 (TGSSLNPARTFGPYLGDSLMGIN). Positions 200–202 (NPA) match the NPA 2 motif. The helical transmembrane segment at 218-238 (LWQYFPIYVIGPIVGAVAAAW) threads the bilayer. Residues 239–246 (LYNYLAKE) lie on the Cytoplasmic side of the membrane.

The protein belongs to the MIP/aquaporin (TC 1.A.8) family.

The protein resides in the cell membrane. Its function is as follows. Channel that permits osmotically driven movement of water in both directions. The sequence is that of Probable aquaporin AqpM (aqpM) from Archaeoglobus fulgidus (strain ATCC 49558 / DSM 4304 / JCM 9628 / NBRC 100126 / VC-16).